Here is a 97-residue protein sequence, read N- to C-terminus: NADH dehydrogenase [ubiquinone] 1 alpha subcomplex subunit 2 (97 aa).

An intrachain disulfide couples Cys19 to Cys53.

It belongs to the complex I NDUFA2 subunit family. Complex I is composed of at least 49 different subunits.

It localises to the mitochondrion inner membrane. Accessory subunit of the mitochondrial membrane respiratory chain NADH dehydrogenase (Complex I), that is believed not to be involved in catalysis. Complex I functions in the transfer of electrons from NADH to the respiratory chain. The immediate electron acceptor for the enzyme is believed to be ubiquinone. The protein is NADH dehydrogenase [ubiquinone] 1 alpha subcomplex subunit 2 of Arabidopsis thaliana (Mouse-ear cress).